We begin with the raw amino-acid sequence, 272 residues long: 3-methyl-2-oxobutanoate hydroxymethyltransferase (272 aa).

The Mg(2+) site is built by D42 and D86. Residues 42 to 43 (DS), D86, and K116 contribute to the 3-methyl-2-oxobutanoate site. E118 provides a ligand contact to Mg(2+). The active-site Proton acceptor is E185.

The protein belongs to the PanB family. As to quaternary structure, homodecamer; pentamer of dimers. The cofactor is Mg(2+).

The protein localises to the cytoplasm. The enzyme catalyses 3-methyl-2-oxobutanoate + (6R)-5,10-methylene-5,6,7,8-tetrahydrofolate + H2O = 2-dehydropantoate + (6S)-5,6,7,8-tetrahydrofolate. The protein operates within cofactor biosynthesis; (R)-pantothenate biosynthesis; (R)-pantoate from 3-methyl-2-oxobutanoate: step 1/2. Its function is as follows. Catalyzes the reversible reaction in which hydroxymethyl group from 5,10-methylenetetrahydrofolate is transferred onto alpha-ketoisovalerate to form ketopantoate. The chain is 3-methyl-2-oxobutanoate hydroxymethyltransferase from Prochlorococcus marinus (strain NATL1A).